The sequence spans 289 residues: Pyridoxal kinase PdxY (289 aa).

Residues Ser-9 and 44-45 (TQ) contribute to the substrate site. ATP contacts are provided by residues Asp-112, Ala-144, Glu-149, Lys-183, and 210–213 (RPLV). Residue Asp-225 coordinates substrate.

Belongs to the pyridoxine kinase family. PdxY subfamily. In terms of assembly, homodimer. Requires Mg(2+) as cofactor.

It carries out the reaction pyridoxal + ATP = pyridoxal 5'-phosphate + ADP + H(+). It functions in the pathway cofactor metabolism; pyridoxal 5'-phosphate salvage; pyridoxal 5'-phosphate from pyridoxal: step 1/1. Functionally, pyridoxal kinase involved in the salvage pathway of pyridoxal 5'-phosphate (PLP). Catalyzes the phosphorylation of pyridoxal to PLP. This is Pyridoxal kinase PdxY from Proteus mirabilis.